Here is a 147-residue protein sequence, read N- to C-terminus: Heavy metal-dependent transcription regulator 2 (147 aa).

Residues 1-69 (MNIGEASKTS…VEQIKELLAL (69 aa)) enclose the HTH merR-type domain. Positions 3–22 (IGEASKTSGVSSKMIRYYEQ) form a DNA-binding region, H-T-H motif.

It localises to the cytoplasm. Transcriptional regulator involved in acid tolerance. Binds copper. In Rhizobium meliloti (strain 1021) (Ensifer meliloti), this protein is Heavy metal-dependent transcription regulator 2 (hmrR2).